The following is a 55-amino-acid chain: Large ribosomal subunit protein bL33 (55 aa).

The protein belongs to the bacterial ribosomal protein bL33 family.

The polypeptide is Large ribosomal subunit protein bL33 (Aromatoleum aromaticum (strain DSM 19018 / LMG 30748 / EbN1) (Azoarcus sp. (strain EbN1))).